The following is a 186-amino-acid chain: Peptidyl-tRNA hydrolase (186 aa).

TRNA is bound at residue Tyr14. Residue His19 is the Proton acceptor of the active site. Residues Tyr64, Asn66, and Asn112 each coordinate tRNA.

This sequence belongs to the PTH family. In terms of assembly, monomer.

It localises to the cytoplasm. The catalysed reaction is an N-acyl-L-alpha-aminoacyl-tRNA + H2O = an N-acyl-L-amino acid + a tRNA + H(+). Its function is as follows. Hydrolyzes ribosome-free peptidyl-tRNAs (with 1 or more amino acids incorporated), which drop off the ribosome during protein synthesis, or as a result of ribosome stalling. In terms of biological role, catalyzes the release of premature peptidyl moieties from peptidyl-tRNA molecules trapped in stalled 50S ribosomal subunits, and thus maintains levels of free tRNAs and 50S ribosomes. This is Peptidyl-tRNA hydrolase from Lachnospira eligens (strain ATCC 27750 / DSM 3376 / VPI C15-48 / C15-B4) (Eubacterium eligens).